The primary structure comprises 474 residues: MSINRNLLNIIIILCICLNLGCNDGAQERETDSHTIQVSSLLPSSSSSCVLSPRASTTKSSLHVTHRHGTCSRLNNGKATSPDHVEILRLDQARVNSIHSKLSKKLATDHVSESKSTDLPAKDGSTLGSGNYIVTVGLGTPKNDLSLIFDTGSDLTWTQCQPCVRTCYDQKEPIFNPSKSTSYYNVSCSSAACGSLSSATGNAGSCSASNCIYGIQYGDQSFSVGFLAKEKFTLTNSDVFDGVYFGCGENNQGLFTGVAGLLGLGRDKLSFPSQTATAYNKIFSYCLPSSASYTGHLTFGSAGISRSVKFTPISTITDGTSFYGLNIVAITVGGQKLPIPSTVFSTPGALIDSGTVITRLPPKAYAALRSSFKAKMSKYPTTSGVSILDTCFDLSGFKTVTIPKVAFSFSGGAVVELGSKGIFYVFKISQVCLAFAGNSDDSNAAIFGNVQQQTLEVVYDGAGGRVGFAPNGCS.

A signal peptide spans 1–25 (MSINRNLLNIIIILCICLNLGCNDG). Positions 132-469 (YIVTVGLGTP…DGAGGRVGFA (338 aa)) constitute a Peptidase A1 domain. Active-site residues include Asp150 and Asp352. The cysteines at positions 391 and 432 are disulfide-linked. The GPI-anchor amidated asparagine moiety is linked to residue Asn443. Positions 444–474 (AAIFGNVQQQTLEVVYDGAGGRVGFAPNGCS) are cleaved as a propeptide — removed in mature form.

Belongs to the peptidase A1 family.

The protein localises to the cell membrane. In terms of biological role, probably not redundant with AED1 and not involved in restriction of salicylic acid (SA) or systemic acquired resistance (SAR) signaling. The chain is Aspartyl protease family protein At5g10770 from Arabidopsis thaliana (Mouse-ear cress).